A 406-amino-acid polypeptide reads, in one-letter code: Tryptophan synthase beta chain (406 aa).

Position 99 is an N6-(pyridoxal phosphate)lysine (Lys99).

The protein belongs to the TrpB family. As to quaternary structure, tetramer of two alpha and two beta chains. It depends on pyridoxal 5'-phosphate as a cofactor.

The enzyme catalyses (1S,2R)-1-C-(indol-3-yl)glycerol 3-phosphate + L-serine = D-glyceraldehyde 3-phosphate + L-tryptophan + H2O. Its pathway is amino-acid biosynthesis; L-tryptophan biosynthesis; L-tryptophan from chorismate: step 5/5. Its function is as follows. The beta subunit is responsible for the synthesis of L-tryptophan from indole and L-serine. This chain is Tryptophan synthase beta chain, found in Phenylobacterium zucineum (strain HLK1).